Reading from the N-terminus, the 193-residue chain is Xanthine phosphoribosyltransferase (193 aa).

Xanthine-binding residues include Leu20 and Asn27. Residue 128–132 participates in 5-phospho-alpha-D-ribose 1-diphosphate binding; that stretch reads ASGGT. A xanthine-binding site is contributed by Lys156.

Belongs to the purine/pyrimidine phosphoribosyltransferase family. Xpt subfamily. In terms of assembly, homodimer.

The protein resides in the cytoplasm. It carries out the reaction XMP + diphosphate = xanthine + 5-phospho-alpha-D-ribose 1-diphosphate. It functions in the pathway purine metabolism; XMP biosynthesis via salvage pathway; XMP from xanthine: step 1/1. In terms of biological role, converts the preformed base xanthine, a product of nucleic acid breakdown, to xanthosine 5'-monophosphate (XMP), so it can be reused for RNA or DNA synthesis. The protein is Xanthine phosphoribosyltransferase of Deinococcus deserti (strain DSM 17065 / CIP 109153 / LMG 22923 / VCD115).